The following is a 422-amino-acid chain: Serine protease HTRA2, mitochondrial (422 aa).

The N-terminal 17 residues, 1-17, are a transit peptide targeting the mitochondrion; it reads MALRGSHRLEVIFKRCI. The propeptide occupies 18–74; it reads ASPVFHSHAANRRSSQLAIKGTDPSSNGNSGQDQQNGEQKAKGWRRLVRFFVPFSLG. The span at 29–55 shows a compositional bias: polar residues; sequence RRSSQLAIKGTDPSSNGNSGQDQQNGE. The disordered stretch occupies residues 29–56; the sequence is RRSSQLAIKGTDPSSNGNSGQDQQNGEQ. A helical transmembrane segment spans residues 64–82; that stretch reads LVRFFVPFSLGAAVSAAVI. 2 consecutive short sequence motifs (IAP-binding) follow at residues 75 to 78 and 94 to 97; these read AAVS and SKMT. Residues 139–302 are serine protease; the sequence is SNGSGFIIEQ…IPIDYVKVFL (164 aa). Active-site charge relay system residues include H157, D189, and S266. In terms of domain architecture, PDZ spans 325–410; sequence MGITMLTLTP…NLDIVILRGV (86 aa).

Belongs to the peptidase S1C family. In terms of assembly, interacts with th/DIAP1 (via BIR 2 domain).

Its subcellular location is the mitochondrion intermembrane space. It localises to the mitochondrion membrane. The enzyme catalyses Cleavage of non-polar aliphatic amino-acids at the P1 position, with a preference for Val, Ile and Met. At the P2 and P3 positions, Arg is selected most strongly with a secondary preference for other hydrophilic residues.. In terms of biological role, serine protease that shows proteolytic activity against a non-specific substrate beta-casein. Promotes or induces cell death either by direct binding to and inhibition of BIRC proteins (also called inhibitor of apoptosis proteins, IAPs), leading to an increase in caspase activity, or by a BIRC inhibition-independent, caspase-independent and serine protease activity-dependent mechanism. Can antagonize antiapoptotic activity of th/Diap1 by directly inducing the degradation of th/Diap1. The protein is Serine protease HTRA2, mitochondrial of Drosophila yakuba (Fruit fly).